The sequence spans 465 residues: FAD-dependent monooxygenase olcE (465 aa).

Residues 9–29 form a helical membrane-spanning segment; that stretch reads IIIGGSVAGLTLALSLNKIGI. FAD contacts are provided by Glu-35, Gly-49, Arg-108, Asp-308, and Ala-321.

This sequence belongs to the paxM FAD-dependent monooxygenase family. The cofactor is FAD.

The protein resides in the membrane. It participates in secondary metabolite biosynthesis; terpenoid biosynthesis. Its function is as follows. FAD-dependent monooxygenase; part of the gene cluster that mediates the biosynthesis of 15-deoxyoxalicine B. The first step of the pathway is the synthesis of nicotinyl-CoA from nicotinic acid by the nicotinic acid-CoA ligase olcI. Nicotinyl-CoA is then a substrate of polyketide synthase olcA to produce 4-hydroxy-6-(3-pyridinyl)-2H-pyran-2-one (HPPO) which is further prenylated by the polyprenyl transferase olcH to yield geranylgeranyl-HPPO. Geranylgeranyl pyrophosphate is provided by the cluster-specific geranylgeranyl pyrophosphate synthase olcC. The FAD-dependent monooxygenase olcE catalyzes the epoxidation of geranylgeranyl-HPPO and the terpene cyclase olcD catalyzes the cyclization of the terpenoid component, resulting in the formation of the tricyclic terpene moiety seen in predecaturin E. The cytochrome P450 monooxygenase then catalyzes the allylic oxidation of predecaturin E, which is followed by spirocylization with concomitant loss of one molecule of water to form decaturin E. Decaturin E is the substrate of the cytochrome P450 monooxygenase olcJ which hydroxylates it at the C-29 position to form decaturin F. The short-chain dehydrogenase/reductase olcF may catalyze the oxidation of decaturin F to generate the 29-hydroxyl-27-one intermediate, and subsequent hemiacetal formation probably leads to the formation of decaturin C. The dioxygenase olcK may be a peroxisomal enzyme that catalyzes the hydroxylation of decaturin C into decaturin A once decaturin C is shuttled into the peroxisome by the MFS transporter olcL. Finally the cytochrome P450 monooxygenase olcB catalyzes the oxidative rearrangement to yield 15-deoxyoxalicine B. In the absence of olcJ, decaturin E may be shunted to a pathway in which it is oxidized to a ketone, possibly by olcF, to form decaturin D, which undergoes further allylic oxidation to yield decaturin G. Moreover, in the absence of oclK or oclL, oclB can convert decaturin C into 15-deoxyoxalicine A. This chain is FAD-dependent monooxygenase olcE, found in Penicillium canescens.